A 99-amino-acid chain; its full sequence is Biogenesis of lysosome-related organelles complex 1 subunit SNN1 (99 aa).

The stretch at 34-94 (SINELRESQA…VVLKRYEKMV (61 aa)) forms a coiled coil.

This sequence belongs to the SNAPIN family. Component of the biogenesis of lysosome-related organelles complex-1 (BLOC-1).

The protein resides in the endosome. In terms of biological role, component of the biogenesis of lysosome-related organelles complex-1 (BLOC-1), a complex involved in endosomal cargo sorting. This is Biogenesis of lysosome-related organelles complex 1 subunit SNN1 (SNN1) from Kluyveromyces lactis (strain ATCC 8585 / CBS 2359 / DSM 70799 / NBRC 1267 / NRRL Y-1140 / WM37) (Yeast).